The primary structure comprises 700 residues: Elongation factor G 1 (700 aa).

Residues Glu-8 to Ile-290 enclose the tr-type G domain. Residues Ala-17–Thr-24, Asp-88–His-92, and Asn-142–Asp-145 each bind GTP.

This sequence belongs to the TRAFAC class translation factor GTPase superfamily. Classic translation factor GTPase family. EF-G/EF-2 subfamily.

The protein resides in the cytoplasm. In terms of biological role, catalyzes the GTP-dependent ribosomal translocation step during translation elongation. During this step, the ribosome changes from the pre-translocational (PRE) to the post-translocational (POST) state as the newly formed A-site-bound peptidyl-tRNA and P-site-bound deacylated tRNA move to the P and E sites, respectively. Catalyzes the coordinated movement of the two tRNA molecules, the mRNA and conformational changes in the ribosome. In Bordetella avium (strain 197N), this protein is Elongation factor G 1.